Here is a 295-residue protein sequence, read N- to C-terminus: Ethanolamine ammonia-lyase small subunit (295 aa).

Adenosylcob(III)alamin contacts are provided by Val-207, Glu-228, and Cys-258.

Belongs to the EutC family. As to quaternary structure, the basic unit is a heterodimer which dimerizes to form tetramers. The heterotetramers trimerize; 6 large subunits form a core ring with 6 small subunits projecting outwards. Adenosylcob(III)alamin serves as cofactor.

Its subcellular location is the bacterial microcompartment. The enzyme catalyses ethanolamine = acetaldehyde + NH4(+). Its pathway is amine and polyamine degradation; ethanolamine degradation. Catalyzes the deamination of various vicinal amino-alcohols to oxo compounds. Allows this organism to utilize ethanolamine as the sole source of nitrogen and carbon in the presence of external vitamin B12. The sequence is that of Ethanolamine ammonia-lyase small subunit from Escherichia fergusonii (strain ATCC 35469 / DSM 13698 / CCUG 18766 / IAM 14443 / JCM 21226 / LMG 7866 / NBRC 102419 / NCTC 12128 / CDC 0568-73).